Reading from the N-terminus, the 701-residue chain is MFNKFSKTFQYGRHTVKLETGEIARQASGSVLVSMDDTVVLVAVTVNKDVKPGQDFFPLTVDYYERTYAAGKIPGGFFKREGKQSEKEILTCRLIDRPIRPLFPAGFYHDVQVVATVMSLNPEVDADIPAMIGASAAMVLAGVPFMGPIGAARVGYANGEYILNPTKTELTTSQLDLVVAGTESAVLMVESEAQQLPEAVMLGAVVYGHEQMQAAIKAINELADEVNPVIFEWAPAAEDTELVAQVKALAEADVAAAFKIRQKQARSQALGEAWSKVKAALITEETETLRANHIKSLFKELEANVVRGQILAGEPRIDGRDTRTVRPIAIRTGVLPRAHGSVLFTRGETQALVSTTLGTKQDEQIIDALAGEYTDRFMLHYNFPPYSTGETGRMGPPKRREIGHGRLAKRALIAVLPKQEDFSYSMRVVSEITESNGSSSMASVCGGCLSLMNAGVPLSAHVAGIAMGLILEDNRFAVLTDILGDEDHLGDMDFKVAGTENGVTALQMDIKIQGITKEIMQVALDQAKEGRLHILGIMKSAIDAPQELSTHAPRLYTLRINPDKIRDVIGKGGSVIRALTEETGTSIDIAEDGLITIASVSAEGAEEAKRRIEEITAEVEIGKIYEGTVVKILDKNVGAIVQIMPGRDGLVHISQIANERIANVADHLQEGQQVRVKVLETDERGRIRLSIKAALADAPQV.

Positions 487 and 493 each coordinate Mg(2+). Residues 553–612 (PRLYTLRINPDKIRDVIGKGGSVIRALTEETGTSIDIAEDGLITIASVSAEGAEEAKRRI) enclose the KH domain. Residues 622–692 (GKIYEGTVVK…ERGRIRLSIK (71 aa)) form the S1 motif domain.

It belongs to the polyribonucleotide nucleotidyltransferase family. Requires Mg(2+) as cofactor.

It is found in the cytoplasm. It carries out the reaction RNA(n+1) + phosphate = RNA(n) + a ribonucleoside 5'-diphosphate. Functionally, involved in mRNA degradation. Catalyzes the phosphorolysis of single-stranded polyribonucleotides processively in the 3'- to 5'-direction. The sequence is that of Polyribonucleotide nucleotidyltransferase from Laribacter hongkongensis (strain HLHK9).